A 251-amino-acid chain; its full sequence is MILYEYPFNERIRTLLRLEDLFERFAFFLAQEDPREHHVALTTLFEIAEVTGRADLKSDLMKELERQRQTLAPFRGNPGIEQNALEAVLGEIEQTLANLAQMQGKTGQHLVDNEWLASIRSRAVIPGGTCKFDLPSYYAWQQWPAEQRRQDIAKWVLPMLPLRDAAAIVLRLARESGQASKVMAMQGSYQQMLSGRTYQLMQVRVAPELRVIPEASANKYMLWVRFTMQDGDVRPRAVDIDVPFHLTLCNL.

It belongs to the ZapD family. In terms of assembly, interacts with FtsZ.

Its subcellular location is the cytoplasm. In terms of biological role, cell division factor that enhances FtsZ-ring assembly. Directly interacts with FtsZ and promotes bundling of FtsZ protofilaments, with a reduction in FtsZ GTPase activity. This is Cell division protein ZapD from Burkholderia cenocepacia (strain ATCC BAA-245 / DSM 16553 / LMG 16656 / NCTC 13227 / J2315 / CF5610) (Burkholderia cepacia (strain J2315)).